The following is a 688-amino-acid chain: Protein SDA1 homolog (688 aa).

Phosphoserine is present on residues Ser232, Ser234, and Ser236. The stretch at 254 to 318 (KKSSKNKKKL…ERFEVKMMLM (65 aa)) forms a coiled coil. A compositionally biased stretch (acidic residues) spans 484-498 (VENEEENAEGDEDGW). The interval 484 to 524 (VENEEENAEGDEDGWESASLSDEADSDGEWVDVHHSSDEEQ) is disordered. Residues 514 to 524 (VDVHHSSDEEQ) show a composition bias toward basic and acidic residues. Ser586 and Ser596 each carry phosphoserine. The tract at residues 605 to 688 (KKPKSDKETR…ALLKKRKRMK (84 aa)) is disordered. Over residues 668 to 681 (SFREKQLALRDALL) the composition is skewed to basic and acidic residues.

It belongs to the SDA1 family.

Its subcellular location is the nucleus. The protein localises to the nucleolus. In terms of biological role, required for 60S pre-ribosomal subunits export to the cytoplasm. This is Protein SDA1 homolog (SDAD1) from Bos taurus (Bovine).